The following is an 864-amino-acid chain: Carbohydrate-responsive element-binding protein (864 aa).

Disordered stretches follow at residues 15–41 and 53–77; these read PRVV…AGGL and MVSS…LADF. A phosphoserine mark is found at S20, S23, and S25. The residue at position 27 (T27) is a Phosphothreonine. A Phosphoserine modification is found at S196. Disordered stretches follow at residues 332–397, 449–468, 489–533, 547–570, and 583–602; these read SSGI…APGP, PGVS…QPGP, PHFT…TARD, PEQA…PQDT, and PIPA…LAPP. The span at 351–368 shows a compositional bias: polar residues; sequence GMTPHSGNTRLQARNSCS. A compositionally biased stretch (low complexity) spans 513–531; sequence ASPPTLASATASPTATATA. A Phosphoserine; by AMPK modification is found at S566. Residues 583-596 are compositionally biased toward pro residues; sequence PIPAPTPPRPPPGP. S614, S626, and S643 each carry phosphoserine. Positions 661 to 715 constitute a bHLH domain; the sequence is NRRITHISAEQKRRFNIKLGFDTLHGLVSTLSAQPSLKVSKATTLQKTAEYILML. The tract at residues 715–736 is leucine-zipper; sequence LQQERAAMQEEAQQLRDEIEEL.

Binds DNA as a heterodimer with TCFL4/MLX. In terms of processing, phosphorylation at Ser-566 by AMPK inactivates the DNA-binding activity. As to expression, expressed in the ventricular and intermediate zones of the developing spinal cord of 12.5 dpc embryos. In later embryos expressed in a variety of tissues.

The protein localises to the nucleus. Transcriptional repressor. Binds to the canonical and non-canonical E box sequences 5'-CACGTG-3'. The sequence is that of Carbohydrate-responsive element-binding protein (Mlxipl) from Mus musculus (Mouse).